A 975-amino-acid chain; its full sequence is Nesprin-3 (975 aa).

The Cytoplasmic portion of the chain corresponds to 1–925 (MTQQPQEDFE…PCSLLQKACR (925 aa)). 2 Spectrin repeats span residues 220–325 (QDHE…RLRG) and 647–740 (REHC…QALR). The interval 778 to 798 (LINPQDPIPRRQHGANPLEGH) is disordered. The region spanning 917 to 975 (CSLLQKACRVALPLQLLLLLFLLLLFLLPAGEEERSCALANNFARSFALMLRYNGPPPT) is the KASH domain. A helical; Anchor for type IV membrane protein membrane pass occupies residues 926–946 (VALPLQLLLLLFLLLLFLLPA). At 947-975 (GEEERSCALANNFARSFALMLRYNGPPPT) the chain is on the perinuclear space side.

This sequence belongs to the nesprin family. Core component of LINC complexes which are composed of inner nuclear membrane SUN domain-containing proteins coupled to outer nuclear membrane KASH domain-containing nesprins. SUN and KASH domain-containing proteins seem to bind each other promiscuously; however, differentially expression of LINC complex constituents can give rise to specific assemblies. Interacts with SUN1 and SUN2; probably forming respective LINC complexes. Interacts with PLEC (via actin-binding domain). Interacts with DST. Interacts with SYNE1. Interacts (via KASH domain) with TOR1A (ATP-bound); the interaction is required for SYNE3 nuclear envelope localization. Post-translationally, the disulfid bond with SUN1 or SUN2 is required for stability of the respective LINC complex under tensile forces. As to expression, ubiquitous.

It localises to the nucleus outer membrane. Its subcellular location is the nucleus envelope. It is found in the rough endoplasmic reticulum. Functionally, as a component of the LINC (LInker of Nucleoskeleton and Cytoskeleton) complex involved in the connection between the nuclear lamina and the cytoskeleton. The nucleocytoplasmic interactions established by the LINC complex play an important role in the transmission of mechanical forces across the nuclear envelope and in nuclear movement and positioning. Probable anchoring protein which tethers the nucleus to the cytoskeleton by binding PLEC which can associate with the intermediate filament system. Plays a role in the regulation of aortic epithelial cell morphology, and is required for flow-induced centrosome polarization and directional migration in aortic endothelial cells. This Mus musculus (Mouse) protein is Nesprin-3 (Syne3).